Consider the following 119-residue polypeptide: Large ribosomal subunit protein uL14 (119 aa).

This sequence belongs to the universal ribosomal protein uL14 family. In terms of assembly, part of the 50S ribosomal subunit. Forms a cluster with proteins L3 and L19. In the 70S ribosome, L14 and L19 interact and together make contacts with the 16S rRNA in bridges B5 and B8.

Functionally, binds to 23S rRNA. Forms part of two intersubunit bridges in the 70S ribosome. The sequence is that of Large ribosomal subunit protein uL14 from Ehrlichia canis (strain Jake).